Reading from the N-terminus, the 435-residue chain is Glutamyl-tRNA reductase (435 aa).

Substrate-binding positions include 49–52 (TCNR), Ser-109, 114–116 (EGQ), and Gln-120. Cys-50 (nucleophile) is an active-site residue. Position 198-203 (198-203 (GAGRMS)) interacts with NADP(+).

It belongs to the glutamyl-tRNA reductase family. Homodimer.

The enzyme catalyses (S)-4-amino-5-oxopentanoate + tRNA(Glu) + NADP(+) = L-glutamyl-tRNA(Glu) + NADPH + H(+). Its pathway is porphyrin-containing compound metabolism; protoporphyrin-IX biosynthesis; 5-aminolevulinate from L-glutamyl-tRNA(Glu): step 1/2. It participates in porphyrin-containing compound metabolism; chlorophyll biosynthesis. Catalyzes the NADPH-dependent reduction of glutamyl-tRNA(Glu) to glutamate 1-semialdehyde (GSA). This chain is Glutamyl-tRNA reductase, found in Prochlorococcus marinus (strain MIT 9515).